The sequence spans 369 residues: Phospho-N-acetylmuramoyl-pentapeptide-transferase (369 aa).

The next 10 membrane-spanning stretches (helical) occupy residues Leu-30–Met-50, Gly-74–Trp-94, Leu-97–Phe-117, Ile-136–Ala-156, Tyr-177–Ala-197, Gly-208–Val-228, Gly-244–Trp-264, Ile-272–Ala-292, Ile-297–Val-317, and Thr-346–Leu-366.

This sequence belongs to the glycosyltransferase 4 family. MraY subfamily. The cofactor is Mg(2+).

It is found in the cell inner membrane. The catalysed reaction is UDP-N-acetyl-alpha-D-muramoyl-L-alanyl-gamma-D-glutamyl-meso-2,6-diaminopimeloyl-D-alanyl-D-alanine + di-trans,octa-cis-undecaprenyl phosphate = di-trans,octa-cis-undecaprenyl diphospho-N-acetyl-alpha-D-muramoyl-L-alanyl-D-glutamyl-meso-2,6-diaminopimeloyl-D-alanyl-D-alanine + UMP. It functions in the pathway cell wall biogenesis; peptidoglycan biosynthesis. Its function is as follows. Catalyzes the initial step of the lipid cycle reactions in the biosynthesis of the cell wall peptidoglycan: transfers peptidoglycan precursor phospho-MurNAc-pentapeptide from UDP-MurNAc-pentapeptide onto the lipid carrier undecaprenyl phosphate, yielding undecaprenyl-pyrophosphoryl-MurNAc-pentapeptide, known as lipid I. In Phenylobacterium zucineum (strain HLK1), this protein is Phospho-N-acetylmuramoyl-pentapeptide-transferase.